The following is a 254-amino-acid chain: UPF0246 protein FTN_1542 (254 aa).

The protein belongs to the UPF0246 family.

This is UPF0246 protein FTN_1542 from Francisella tularensis subsp. novicida (strain U112).